Reading from the N-terminus, the 151-residue chain is Methylglyoxal synthase (151 aa).

One can recognise an MGS-like domain in the interval 6 to 151 (RVMPAHKHIA…DYDAYLAERV (146 aa)). Residues H19, K23, 45 to 48 (TGTT), and 65 to 66 (SG) contribute to the substrate site. The Proton donor/acceptor role is filled by D71. H98 contacts substrate.

Belongs to the methylglyoxal synthase family.

The catalysed reaction is dihydroxyacetone phosphate = methylglyoxal + phosphate. In terms of biological role, catalyzes the formation of methylglyoxal from dihydroxyacetone phosphate. The protein is Methylglyoxal synthase of Aliivibrio fischeri (strain ATCC 700601 / ES114) (Vibrio fischeri).